The chain runs to 506 residues: 7,8-dihydro-6-hydroxymethylpterin dimethyltransferase (506 aa).

Positions 73, 77, 80, 98, 102, and 105 each coordinate [4Fe-4S] cluster. The 219-residue stretch at 82–300 (NHKSTTILAN…FIKLVEEQTD (219 aa)) folds into the Radical SAM core domain.

This sequence belongs to the radical SAM superfamily. The cofactor is [4Fe-4S] cluster. S-adenosyl-L-methionine is required as a cofactor.

It functions in the pathway cofactor biosynthesis; 5,6,7,8-tetrahydromethanopterin biosynthesis. Is responsible for the addition of methyl groups at C-7 and C-9 of the pterin ring during methanopterin (MPT) biosynthesis. Catalyzes methylation of 7,8-dihydro-6-hydroxymethylpterin, likely using methylenetetrahydromethanopterin as a methyl group donor, via a radical-based mechanism. This Methanocaldococcus jannaschii (strain ATCC 43067 / DSM 2661 / JAL-1 / JCM 10045 / NBRC 100440) (Methanococcus jannaschii) protein is 7,8-dihydro-6-hydroxymethylpterin dimethyltransferase.